A 228-amino-acid chain; its full sequence is Histidine/lysine/arginine/ornithine transport system permease protein HisQ (228 aa).

The Periplasmic portion of the chain corresponds to 1 to 12 (MLYGFSGVILQG). Residues 13–33 (ALVTLELAISSVVLAVIIGLI) traverse the membrane as a helical segment. The 200-residue stretch at 13–212 (ALVTLELAIS…VFTTVSNGVL (200 aa)) folds into the ABC transmembrane type-1 domain. The Cytoplasmic segment spans residues 34–58 (GAGGKLSQNRLSGLIFEGYTTLIRG). Residues 59–79 (VPDLVLMLLIFYGLQIALNTV) traverse the membrane as a helical segment. Topologically, residues 80 to 87 (TEAMGVGQ) are periplasmic. Residues 88 to 108 (IDIDPMVAGIITLGFIYGAYF) form a helical membrane-spanning segment. The Cytoplasmic segment spans residues 109–148 (TETFRGAFMAVPKGHIEAATAFGFTRGQVFRRIMFPSMMR). The helical transmembrane segment at 149–171 (YALPGIGNNWQVILKSTALVSLL) threads the bilayer. Topologically, residues 172–194 (GLEDVVKATQLAGKSTWEPFYFA) are periplasmic. A helical membrane pass occupies residues 195-215 (IVCGVIYLVFTTVSNGVLLFL). Over 216 to 228 (ERRYSVGVKRADL) the chain is Cytoplasmic.

This sequence belongs to the binding-protein-dependent transport system permease family. HisMQ subfamily. The HisPMQJ complex is composed of two ATP-binding proteins (HisP), two transmembrane proteins (HisM and HisQ) and a solute-binding protein (HisJ). The HisPMQ-ArgT complex is composed of two ATP-binding proteins (HisP), two transmembrane proteins (HisM and HisQ) and a solute-binding protein (ArgT).

The protein resides in the cell inner membrane. Part of the ABC transporter complex HisPMQJ involved in histidine transport. Is also part of the ABC transporter complex HisPMQ-ArgT involved in lysine/arginine/ornithine transport. Probably responsible for the translocation of the substrate across the membrane. This is Histidine/lysine/arginine/ornithine transport system permease protein HisQ (hisQ) from Escherichia coli (strain K12).